The sequence spans 234 residues: Sugar fermentation stimulation protein homolog (234 aa).

Belongs to the SfsA family.

In Edwardsiella ictaluri (strain 93-146), this protein is Sugar fermentation stimulation protein homolog.